The sequence spans 274 residues: Glutamate--cysteine ligase regulatory subunit (274 aa).

The residue at position 59 (serine 59) is a Phosphoserine. Lysine 263 carries the post-translational modification N6-acetyllysine.

The protein belongs to the aldo/keto reductase family. Glutamate--cysteine ligase light chain subfamily. Heterodimer of a catalytic heavy chain and a regulatory light chain.

It participates in sulfur metabolism; glutathione biosynthesis; glutathione from L-cysteine and L-glutamate: step 1/2. The polypeptide is Glutamate--cysteine ligase regulatory subunit (Gclm) (Mus musculus (Mouse)).